Consider the following 368-residue polypeptide: Interferon-stimulated 20 kDa exonuclease-like 2 (368 aa).

Disordered regions lie at residues 33–107 and 127–187; these read FLEQ…APSK and PKTK…PTVP. Residues 42–54 are compositionally biased toward polar residues; it reads KKNQPPNKVSKLN. The span at 77–96 shows a compositional bias: basic and acidic residues; that stretch reads KKKEAAASKRDSERSKDKKA. Residues 131–145 are compositionally biased toward basic residues; it reads STQKKGSKKKSLKKK. The Exonuclease domain occupies 194-368; the sequence is MVAIDCEMVG…QHLAQNPPEN (175 aa).

It is found in the nucleus. The protein localises to the nucleolus. Functionally, 3'-&gt; 5'-exoribonuclease involved in ribosome biogenesis in the processing of the 12S pre-rRNA. Displays a strong specificity for a 3'-end containing a free hydroxyl group. This chain is Interferon-stimulated 20 kDa exonuclease-like 2 (Isg20l2), found in Mus musculus (Mouse).